A 430-amino-acid polypeptide reads, in one-letter code: GPI mannosyltransferase 1 (430 aa).

At 1-11 the chain is on the cytoplasmic side; sequence MELQSLIDTVS. A helical transmembrane segment spans residues 12 to 32; sequence LQKLLLLGALLRLILIAYAFF. Residues 33-72 are Lumenal-facing; the sequence is HDQWFRVKYTDIDYMIVVDGARHMWNGGSPFDRTTFRYTP. The helical transmembrane segment at 73–93 threads the bilayer; it reads LLAALVMPSIWIANPMGKLIF. The Cytoplasmic portion of the chain corresponds to 94–115; that stretch reads ASSDLGAAWYCYGVLKSFAKER. The helical transmembrane segment at 116 to 136 threads the bilayer; the sequence is SAKWMVSLFILFNPIVLSVST. At 137–163 the chain is on the lumenal side; sequence RGNSDMLVTFMSLMVLSKFARRKCYQA. The chain crosses the membrane as a helical span at residues 164 to 184; that stretch reads AAVLGFAVHFKIYPIIYALPL. At 185 to 206 the chain is on the cytoplasmic side; it reads TLGVWEQSVAASTNTWRRVVKT. A helical membrane pass occupies residues 207–227; sequence AVVVSICALMAAISFAVPTVL. Residues 228–360 lie on the Lumenal side of the membrane; sequence CYMKYGQQYL…AFKFFSWVKA (133 aa). Residues 361-381 traverse the membrane as a helical segment; the sequence is LGVVLMWAATIPLWVTTAVPL. Residues 382–388 are Cytoplasmic-facing; sequence EFHGYSD. The chain crosses the membrane as a helical span at residues 389–409; the sequence is FAQLWIVSCLFFLAMVVLASM. Topologically, residues 410–430 are lumenal; sequence LARIAYRVQCTKCSAKSIKVA.

Belongs to the PIGM family.

It is found in the endoplasmic reticulum membrane. Its pathway is glycolipid biosynthesis; glycosylphosphatidylinositol-anchor biosynthesis. Functionally, mannosyltransferase involved in glycosylphosphatidylinositol-anchor biosynthesis. Transfers the first alpha-1,4-mannose to GlcN-PI during GPI precursor assembly. This Trypanosoma brucei brucei (strain 927/4 GUTat10.1) protein is GPI mannosyltransferase 1 (PIGM).